The sequence spans 247 residues: Oocyte zinc finger protein XlCOF20 (247 aa).

8 consecutive C2H2-type zinc fingers follow at residues 6-28 (YDCR…QRVH), 34-56 (FPCT…QRVH), 62-84 (FICS…LRVH), 90-112 (FVCT…QRVH), 118-140 (FTCT…LRVH), 146-168 (FVCT…LRVH), 174-196 (FMCA…QRIC), and 225-247 (QSCA…MRVH).

Belongs to the krueppel C2H2-type zinc-finger protein family.

Its subcellular location is the nucleus. Its function is as follows. May be involved in transcriptional regulation. In Xenopus laevis (African clawed frog), this protein is Oocyte zinc finger protein XlCOF20.